Consider the following 292-residue polypeptide: Putative xanthine dehydrogenase FAD-binding subunit XdhB (292 aa).

The FAD-binding PCMH-type domain maps to 1 to 176 (MFDFASYHRA…VAFHFPPQPK (176 aa)). FAD contacts are provided by residues 27–34 (KLLAGGTD), 109–113 (ATYGG), isoleucine 165, and phenylalanine 184.

Heterotrimer of XdhA, XdhB and XdhC. FAD serves as cofactor.

It carries out the reaction xanthine + NAD(+) + H2O = urate + NADH + H(+). The catalysed reaction is hypoxanthine + NAD(+) + H2O = xanthine + NADH + H(+). Its pathway is purine metabolism; hypoxanthine degradation; urate from hypoxanthine: step 1/2. It functions in the pathway purine metabolism; hypoxanthine degradation; urate from hypoxanthine: step 2/2. In terms of biological role, presumed to be a dehydrogenase, but possibly an oxidase. Participates in limited purine salvage (requires aspartate) but does not support aerobic growth on purines as the sole carbon source (purine catabolism). The protein is Putative xanthine dehydrogenase FAD-binding subunit XdhB (xdhB) of Escherichia coli (strain K12).